Here is a 239-residue protein sequence, read N- to C-terminus: Probable 2-phosphosulfolactate phosphatase (239 aa).

This sequence belongs to the ComB family. It depends on Mg(2+) as a cofactor.

The catalysed reaction is (2R)-O-phospho-3-sulfolactate + H2O = (2R)-3-sulfolactate + phosphate. This chain is Probable 2-phosphosulfolactate phosphatase, found in Clostridium botulinum (strain Okra / Type B1).